A 316-amino-acid polypeptide reads, in one-letter code: Biotin synthase (316 aa).

Residues 38–266 form the Radical SAM core domain; that stretch reads YKGKKIELCA…DKDIRVCGGR (229 aa). Cysteine 56, cysteine 60, and cysteine 63 together coordinate [4Fe-4S] cluster. [2Fe-2S] cluster is bound by residues serine 100, cysteine 131, cysteine 191, and arginine 261.

Belongs to the radical SAM superfamily. Biotin synthase family. In terms of assembly, homodimer. [4Fe-4S] cluster is required as a cofactor. [2Fe-2S] cluster serves as cofactor.

It catalyses the reaction (4R,5S)-dethiobiotin + (sulfur carrier)-SH + 2 reduced [2Fe-2S]-[ferredoxin] + 2 S-adenosyl-L-methionine = (sulfur carrier)-H + biotin + 2 5'-deoxyadenosine + 2 L-methionine + 2 oxidized [2Fe-2S]-[ferredoxin]. Its pathway is cofactor biosynthesis; biotin biosynthesis; biotin from 7,8-diaminononanoate: step 2/2. In terms of biological role, catalyzes the conversion of dethiobiotin (DTB) to biotin by the insertion of a sulfur atom into dethiobiotin via a radical-based mechanism. The chain is Biotin synthase from Thermodesulfovibrio yellowstonii (strain ATCC 51303 / DSM 11347 / YP87).